The primary structure comprises 142 residues: Ribosome-binding factor A (142 aa).

The interval E119–T142 is disordered. A compositionally biased stretch (polar residues) spans E123–T142.

It belongs to the RbfA family. In terms of assembly, monomer. Binds 30S ribosomal subunits, but not 50S ribosomal subunits or 70S ribosomes.

The protein resides in the cytoplasm. Functionally, one of several proteins that assist in the late maturation steps of the functional core of the 30S ribosomal subunit. Associates with free 30S ribosomal subunits (but not with 30S subunits that are part of 70S ribosomes or polysomes). Required for efficient processing of 16S rRNA. May interact with the 5'-terminal helix region of 16S rRNA. The chain is Ribosome-binding factor A from Prochlorococcus marinus (strain MIT 9303).